The sequence spans 315 residues: MESDLTTEHHLPFIRIHKNGRVERLSGNDIKPTSLNPQNDVVSKDVMYSSDHNLSVRMFLPNKSRKLDTAGNKIPLLIYFHGGAYIIQSPFSPVYHNYLTEVVITANCLAVSVQYRLAPEHPVPAAYDDSWSAIQWIFSHSDDWINEYADFDRVFIAGDSAGANISHHMGIRAGKEKLSPTIKGIVMVHPGFWGKEPIDEHDVQDGEVRNKIAYIWENIVSPNSVDGVNDPWFNVVGSGSDVSEMGCEKVLVAVAGKDVFWRQGLAYAAKLEKSQWKGSVEVIEEEEEGHCFHLHNHNSQNASKLMQKFLEFIIS.

Position 1 is an N-acetylmethionine (M1). Residues 81–83 carry the Involved in the stabilization of the negatively charged intermediate by the formation of the oxyanion hole motif; sequence HGG. Residues S160, D258, and H290 contribute to the active site.

It belongs to the 'GDXG' lipolytic enzyme family. Expressed in flowers and siliques.

It catalyses the reaction a carboxylic ester + H2O = an alcohol + a carboxylate + H(+). Its function is as follows. Carboxylesterase acting on esters with varying acyl chain length. This chain is Probable carboxylesterase 3 (CXE3), found in Arabidopsis thaliana (Mouse-ear cress).